Here is a 20-residue protein sequence, read N- to C-terminus: Unknown protein NF007 from 2D-PAGE (20 aa).

The polypeptide is Unknown protein NF007 from 2D-PAGE (Naegleria fowleri (Brain eating amoeba)).